The primary structure comprises 315 residues: Acetyl-coenzyme A carboxylase carboxyl transferase subunit alpha (315 aa).

In terms of domain architecture, CoA carboxyltransferase C-terminal spans 36–289 (LSKKRLELME…RKAVAAELKI (254 aa)).

The protein belongs to the AccA family. In terms of assembly, acetyl-CoA carboxylase is a heterohexamer composed of biotin carboxyl carrier protein (AccB), biotin carboxylase (AccC) and two subunits each of ACCase subunit alpha (AccA) and ACCase subunit beta (AccD).

The protein resides in the cytoplasm. The catalysed reaction is N(6)-carboxybiotinyl-L-lysyl-[protein] + acetyl-CoA = N(6)-biotinyl-L-lysyl-[protein] + malonyl-CoA. It functions in the pathway lipid metabolism; malonyl-CoA biosynthesis; malonyl-CoA from acetyl-CoA: step 1/1. Functionally, component of the acetyl coenzyme A carboxylase (ACC) complex. First, biotin carboxylase catalyzes the carboxylation of biotin on its carrier protein (BCCP) and then the CO(2) group is transferred by the carboxyltransferase to acetyl-CoA to form malonyl-CoA. This Francisella tularensis subsp. holarctica (strain FTNF002-00 / FTA) protein is Acetyl-coenzyme A carboxylase carboxyl transferase subunit alpha.